The chain runs to 427 residues: Probable glucuronosyltransferase Os03g0107900 (427 aa).

Topologically, residues methionine 1–serine 33 are cytoplasmic. The helical; Signal-anchor for type II membrane protein transmembrane segment at threonine 34–alanine 54 threads the bilayer. The Lumenal segment spans residues threonine 55 to arginine 427. N-linked (GlcNAc...) asparagine glycans are attached at residues asparagine 136, asparagine 168, asparagine 264, and asparagine 374.

Belongs to the glycosyltransferase 47 family.

It localises to the golgi apparatus membrane. Its function is as follows. Involved in the synthesis of glucuronoxylan hemicellulose in secondary cell walls. This Oryza sativa subsp. japonica (Rice) protein is Probable glucuronosyltransferase Os03g0107900.